A 253-amino-acid chain; its full sequence is Electron transfer flavoprotein subunit beta, mitochondrial (253 aa).

It belongs to the ETF beta-subunit/FixA family. As to quaternary structure, heterodimer of an alpha and a beta subunit. Requires FAD as cofactor. The cofactor is AMP.

It localises to the mitochondrion matrix. In terms of biological role, the electron transfer flavoprotein serves as a specific electron acceptor for several dehydrogenases, including five acyl-CoA dehydrogenases, glutaryl-CoA and sarcosine dehydrogenase. It transfers the electrons to the main mitochondrial respiratory chain via ETF-ubiquinone oxidoreductase (ETF dehydrogenase). The protein is Electron transfer flavoprotein subunit beta, mitochondrial (ETFB) of Oryza sativa subsp. japonica (Rice).